Reading from the N-terminus, the 195-residue chain is MPIVIEQSARGERAFDIYSRLLKERVIFLVGQVEDYMANLVIAQLLFLESENPDKDIHLYINSPGGLVTAGLAIYDTMQFIKPDVSTLCVGQAASMGALLLAGGAAGKRYCLPHSRIMIHQPLGGFQGQASDIDIHAREILAVRDRLNKILAHHTGQPIEKIQIDTDRDNFMGGDDAVSYGLIDKVLTHRTVTAA.

Ser-95 serves as the catalytic Nucleophile. His-120 is an active-site residue.

It belongs to the peptidase S14 family. In terms of assembly, fourteen ClpP subunits assemble into 2 heptameric rings which stack back to back to give a disk-like structure with a central cavity, resembling the structure of eukaryotic proteasomes.

The protein resides in the cytoplasm. It carries out the reaction Hydrolysis of proteins to small peptides in the presence of ATP and magnesium. alpha-casein is the usual test substrate. In the absence of ATP, only oligopeptides shorter than five residues are hydrolyzed (such as succinyl-Leu-Tyr-|-NHMec, and Leu-Tyr-Leu-|-Tyr-Trp, in which cleavage of the -Tyr-|-Leu- and -Tyr-|-Trp bonds also occurs).. Its function is as follows. Cleaves peptides in various proteins in a process that requires ATP hydrolysis. Has a chymotrypsin-like activity. Plays a major role in the degradation of misfolded proteins. The chain is ATP-dependent Clp protease proteolytic subunit 2 from Methylococcus capsulatus (strain ATCC 33009 / NCIMB 11132 / Bath).